The following is a 154-amino-acid chain: RING finger protein 11 (154 aa).

A compositionally biased stretch (polar residues) spans 1–12; the sequence is MGNCLKSPTSDD. The interval 1-53 is disordered; the sequence is MGNCLKSPTSDDISLLHESQSDRASFGEGTEPDQEPPPPYQEQVPVPVYHPTP. Gly-2 carries N-myristoyl glycine lipidation. The S-palmitoyl cysteine moiety is linked to residue Cys-4. Residues Ser-14 and Ser-25 each carry the phosphoserine modification. Positions 37–40 match the PPxY motif motif; that stretch reads PPPY. Residues 41–51 show a composition bias toward low complexity; that stretch reads QEQVPVPVYHP. Residues 99–140 form an RING-type zinc finger; it reads CVICMMDFVYGDPIRFLPCMHIYHLDCIDDWLMRSFTCPSCM. At Thr-135 the chain carries Phosphothreonine; by PKB/AKT1.

As to quaternary structure, interacts (when phosphorylated) with 14-3-3. Interacts with the E3 ubiquitin-ligases NEDD4, ITCH, SMURF2 and WWP1. Also interacts with the E2 ubiquitin-conjugating enzymes UBE2D1 and UBE2N, but neither with CDC34, nor with UBE2L3. Interacts with ZNF350, EPS15 and STAMBP. After TNF stimulation, interacts with TAX1BP1, TNFAIP3 and RIPK1; these interactions are transient and they are lost after 1 hour of stimulation with TNF. Interacts with GGA1. In terms of processing, ubiquitinated in the presence of ITCH, SMURF2 and UBE2D1, as well as WWP1. Post-translationally, phosphorylation by PKB/AKT1 may accelerate degradation by the proteasome. Acylation at both Gly-2 and Cys-4 is required for proper localization to the endosomes.

Its subcellular location is the early endosome. The protein resides in the recycling endosome. It is found in the cytoplasm. The protein localises to the nucleus. Essential component of a ubiquitin-editing protein complex, comprising also TNFAIP3, ITCH and TAX1BP1, that ensures the transient nature of inflammatory signaling pathways. Promotes the association of TNFAIP3 to RIPK1 after TNF stimulation. TNFAIP3 deubiquitinates 'Lys-63' polyubiquitin chains on RIPK1 and catalyzes the formation of 'Lys-48'-polyubiquitin chains. This leads to RIPK1 proteasomal degradation and consequently termination of the TNF- or LPS-mediated activation of NF-kappa-B. Recruits STAMBP to the E3 ubiquitin-ligase SMURF2 for ubiquitination, leading to its degradation by the 26S proteasome. The protein is RING finger protein 11 (RNF11) of Bos taurus (Bovine).